Reading from the N-terminus, the 134-residue chain is Transcription antitermination protein NusB (134 aa).

This sequence belongs to the NusB family.

Functionally, involved in transcription antitermination. Required for transcription of ribosomal RNA (rRNA) genes. Binds specifically to the boxA antiterminator sequence of the ribosomal RNA (rrn) operons. This is Transcription antitermination protein NusB from Shewanella amazonensis (strain ATCC BAA-1098 / SB2B).